Here is a 216-residue protein sequence, read N- to C-terminus: ATP synthase subunit C lysine N-methyltransferase (216 aa).

N-acetylmethionine is present on Met1. The segment covering 1 to 12 (MERGETPEEERQ) has biased composition (basic and acidic residues). Residues 1-25 (MERGETPEEERQSGCVLPTSPESDS) are disordered. Residues 31 to 50 (WGFLITGVIGGALVTVYAVT) form a helical membrane-spanning segment. Positions 51 to 85 (TPFIAPALRKVCLPFVPATSRQVENVVKMLQHRRG) are required for mitochondrial location.

Belongs to the ANT/ATPSC lysine N-methyltransferase family.

It localises to the mitochondrion membrane. The catalysed reaction is L-lysyl-[protein] + 3 S-adenosyl-L-methionine = N(6),N(6),N(6)-trimethyl-L-lysyl-[protein] + 3 S-adenosyl-L-homocysteine + 3 H(+). Functionally, mitochondrial protein-lysine N-methyltransferase that trimethylates ATP synthase subunit C, ATP5MC1 and ATP5MC2. Trimethylation is required for proper incorporation of the C subunit into the ATP synthase complex and mitochondrial respiration. Promotes chronic pain. Involved in persistent inflammatory and neuropathic pain: methyltransferase activity in the mitochondria of sensory neurons promotes chronic pain via a pathway that depends on the production of reactive oxygen species (ROS) and on the engagement of spinal cord microglia. The sequence is that of ATP synthase subunit C lysine N-methyltransferase (Atpsckmt) from Rattus norvegicus (Rat).